Reading from the N-terminus, the 347-residue chain is Fructose-1,6-bisphosphatase (347 aa).

AMP-binding positions include 19–23 and 44–48; these read ILQEQ and SGELS. Mg(2+) contacts are provided by aspartate 85 and glutamate 114. Position 127 to 128 (127 to 128) interacts with AMP; sequence SY. Residues aspartate 133, isoleucine 135, and aspartate 136 each coordinate Mg(2+). 136–139 is a substrate binding site; it reads DGSS. Residue lysine 155 coordinates AMP. Residues 227–230, 258–263, tyrosine 279, and 288–290 each bind substrate; these read NEGY, RYIGSM, and KLR. A Mg(2+)-binding site is contributed by glutamate 294.

The protein belongs to the FBPase class 1 family. In terms of assembly, homotetramer. Mg(2+) is required as a cofactor.

The enzyme catalyses beta-D-fructose 1,6-bisphosphate + H2O = beta-D-fructose 6-phosphate + phosphate. It functions in the pathway carbohydrate biosynthesis; gluconeogenesis. Its activity is regulated as follows. Subject to complex allosteric regulation. The enzyme can assume an active R-state, or an inactive T-state. Intermediate conformations may exist. AMP acts as allosteric inhibitor. AMP binding affects the turnover of bound substrate and not the affinity for substrate. This chain is Fructose-1,6-bisphosphatase (fbp1), found in Schizosaccharomyces pombe (strain 972 / ATCC 24843) (Fission yeast).